The primary structure comprises 329 residues: Peroxidase 73 (329 aa).

The signal sequence occupies residues 1 to 25 (MARFSLVVVVTLSLAISMFPDTTTA). 4 cysteine pairs are disulfide-bonded: cysteine 36–cysteine 119, cysteine 69–cysteine 74, cysteine 125–cysteine 325, and cysteine 204–cysteine 236. The active-site Proton acceptor is histidine 67. Ca(2+)-binding residues include aspartate 68, valine 71, glycine 73, aspartate 75, and serine 77. Proline 167 is a binding site for substrate. Histidine 197 provides a ligand contact to heme b. Threonine 198 provides a ligand contact to Ca(2+). N-linked (GlcNAc...) asparagine glycosylation occurs at asparagine 215. 3 residues coordinate Ca(2+): aspartate 249, threonine 252, and aspartate 257.

Belongs to the peroxidase family. Classical plant (class III) peroxidase subfamily. It depends on heme b as a cofactor. The cofactor is Ca(2+). Expressed in the whole plant, with the highest expression in roots.

It is found in the secreted. The enzyme catalyses 2 a phenolic donor + H2O2 = 2 a phenolic radical donor + 2 H2O. Removal of H(2)O(2), oxidation of toxic reductants, biosynthesis and degradation of lignin, suberization, auxin catabolism, response to environmental stresses such as wounding, pathogen attack and oxidative stress. These functions might be dependent on each isozyme/isoform in each plant tissue. This is Peroxidase 73 (PER73) from Arabidopsis thaliana (Mouse-ear cress).